A 364-amino-acid polypeptide reads, in one-letter code: 4-hydroxythreonine-4-phosphate dehydrogenase (364 aa).

Positions 148 and 149 each coordinate substrate. The a divalent metal cation site is built by His-177, His-216, and His-301. Residues Lys-309, Asn-318, and Arg-327 each contribute to the substrate site.

This sequence belongs to the PdxA family. Homodimer. Requires Zn(2+) as cofactor. Mg(2+) serves as cofactor. The cofactor is Co(2+).

It localises to the cytoplasm. It catalyses the reaction 4-(phosphooxy)-L-threonine + NAD(+) = 3-amino-2-oxopropyl phosphate + CO2 + NADH. It participates in cofactor biosynthesis; pyridoxine 5'-phosphate biosynthesis; pyridoxine 5'-phosphate from D-erythrose 4-phosphate: step 4/5. In terms of biological role, catalyzes the NAD(P)-dependent oxidation of 4-(phosphooxy)-L-threonine (HTP) into 2-amino-3-oxo-4-(phosphooxy)butyric acid which spontaneously decarboxylates to form 3-amino-2-oxopropyl phosphate (AHAP). The sequence is that of 4-hydroxythreonine-4-phosphate dehydrogenase from Campylobacter jejuni subsp. jejuni serotype O:2 (strain ATCC 700819 / NCTC 11168).